The chain runs to 370 residues: GTPase Obg (370 aa).

Residues Met1 to Leu159 enclose the Obg domain. Positions Asn127–Gly147 are disordered. One can recognise an OBG-type G domain in the interval Ala160–Ala334. GTP-binding positions include Gly166 to Ser173, Phe191 to Ala195, Asp213 to Gly216, Asn284 to Asp287, and Ser315 to Leu317. The Mg(2+) site is built by Ser173 and Thr193.

This sequence belongs to the TRAFAC class OBG-HflX-like GTPase superfamily. OBG GTPase family. As to quaternary structure, monomer. Mg(2+) is required as a cofactor.

The protein resides in the cytoplasm. An essential GTPase which binds GTP, GDP and possibly (p)ppGpp with moderate affinity, with high nucleotide exchange rates and a fairly low GTP hydrolysis rate. Plays a role in control of the cell cycle, stress response, ribosome biogenesis and in those bacteria that undergo differentiation, in morphogenesis control. This is GTPase Obg from Paraburkholderia phymatum (strain DSM 17167 / CIP 108236 / LMG 21445 / STM815) (Burkholderia phymatum).